Reading from the N-terminus, the 531-residue chain is Cytochrome P450 monooxygenase peniB (531 aa).

Residues 30–48 traverse the membrane as a helical segment; that stretch reads ILSIAAVVFLGYLLLRPLF. Cys-445 is a binding site for heme.

This sequence belongs to the cytochrome P450 family. The cofactor is heme.

It localises to the membrane. It catalyses the reaction silphinene-15-oate + 2 reduced [NADPH--hemoprotein reductase] + 2 O2 = gamma-lactone-2-keto[5.5.5.5]fenestrane + 2 oxidized [NADPH--hemoprotein reductase] + 3 H2O + H(+). Its pathway is secondary metabolite biosynthesis; terpenoid biosynthesis. Cytochrome P450 monooxygenase; part of the gene cluster that mediates the biosynthesis of penifulvin A, a potent insecticidal sesquiterpene that features a [5.5.5.6]dioxafenestrane ring. Within the pathway, peniB catalyzes the multi-step oxidation of silphinene to synthesize gamma-lactone-2-keto[5.5.5.5]fenestrane, including oxidation of the C15 methylgroup in silphinene to form silphinene-15-oic acid, activationof the C1-C2 double bond to form the gamma-lactone-2-hydroxy[5.5.5.5]fenestrane, and dehydrogenation of the hydroxy group at C2 of gamma-lactone-2-hydroxy[5.5.5.5]fenestrane to generate gamma-lactone-2-keto[5.5.5.5]fenestrane. The first step of the pathway is performed by the sesquiterpene cyclase peniA that generates the angular triquinane scaffold silphinene via cyclization of the linear farnesyl pyrophosphate (FPP). The cytochrome P450 monooxygenase peniB and the flavin-dependent monooxygenase peniC then catalyze a series of oxidation reactions to transform silphinene into penifulvin A. This Penicillium patulum (Penicillium griseofulvum) protein is Cytochrome P450 monooxygenase peniB.